A 202-amino-acid chain; its full sequence is Small ribosomal subunit protein uS5 (202 aa).

In terms of domain architecture, S5 DRBM spans 50-113 (LKQELLNVNI…REAKLNLIPV (64 aa)).

It belongs to the universal ribosomal protein uS5 family. As to quaternary structure, part of the 30S ribosomal subunit. Contacts protein S4.

In terms of biological role, with S4 and S12 plays an important role in translational accuracy. This chain is Small ribosomal subunit protein uS5, found in Pyrobaculum arsenaticum (strain DSM 13514 / JCM 11321 / PZ6).